The primary structure comprises 1499 residues: MAEERPPRLVDYFVVAGLAGNGAPIPEEKWVPEPTGPLRPPRPAEPITDVAVIARALGEEVPQGYTCIQTSAGGHPLELSAGLLGGTQPVICYRRGRDKPPLVELGVLYEGKERPKLGFQVLDTTPYSHSANLAPPGPGHPRTYLMYRRAAEGAGLHALGITDLCLVLPSKGEGTPHTYCRLPRNLNPGMWGPAVYLCYKVGLAKANTLVYEAELLGRYPEEDNEAFPLPESVPVFCLPMGATIECWPAQTKYPVPVFSTFVLTGAAGDKVYGAALQFYEAFPRARLSERQARALGLMSAVERGRALGGRAVRSRRAIAVLSRWPAFPAFRAFLTFLYRYSVSGPHRLPLEAHISHFIHNVPFPSPQRPRILVQMSPYDNLLLCQPVSSPLPLSGASFLQLLQNLGPELAITLLLAVLTEHKLLVHSLRPDLLTSVCEALVSMIFPLHWQCPYIPLCPLVLADVLSAPVPFIVGIHSSYFDLHDPPADVICVDLDTNTLFQKEEKKPLSARTLPRRPYKLLLATLTSLYQQLDQTYTGPEEEASLEFLLTDYEAVCGRRTRLEREVQGAFLRFMACLLKGYRNFLRPLTQAPSEGSRDVDNLFYLQGFLKSRERSSHKLYSQLLHTQMFSQFIEECSFGSARHAALEFFDSCVDKVHPEQEKPEPTPLVELEELSGSELTVFITPPEEPPVLEGSESTPQYCYDGFPELKAELFESPQEQQGALPVPGPSRSAPSSPAPRRTKQEMKVAQRMAQKSATVPELWARCLLGHCYGLWFLCLPAYVRSVPSRVRALHTAYHVLREMENRKVVLPDEVCYRVLMQLCSHYGQPVLSVRVMLEMRRAGIVPNTITYGYYNKAVLESKWPSGTPGGRLRWAKLRNVVLGAAQFRQPLKDRRQQQQQQQQQQQQKQQVAEQQKSGSSQTEPYLERPSPTRPLQRQTTWAGRSLREPSSPMGRLVKSGSLGSARGTQPTVEAGVAHMIEALGVLEPRGSPVPWQDGSLSDLSLTGEEMAPGGSPGGSGSALSAQSTEALEGISGRGSKTSGCQEEVGTPRKGLGARLQQLLTPSRRASASRIPPPELPSDLPPAARRSPMDSLLWPRERPGSTASESSASLGSEWDISESSLSSLSLRRSSERLSDTPGAFQPPSLEILMSSCSLCHACDSLVYDEEIMAGWAPDDSNLNTTCPFCACHFVPLLSVQTLDSRPSAPSPKSSLAGASGCKDAPAPGGPGPVLSDRRFCLALDQPQLCNGHMGSASRRVENGAWAYLSPLVLRKELESLVENEGSEVLALPELPAAHPIIFWNLLWYFQRLRLPSVLPGLVLASCNGPPPSQLSQGPSPWLTPDPASVHVHLLWDVLTPDPNSCPPLYVLWRVHSQIPQRVVWPGPVPSCLSLALLESVLRHVGLNEVHKAVGLLLETLGPPPTGLHLQRGIYREILFLTMAALGKDHVDIVAFDKKYKSAFNKLASSMGKEELRQRRAQMPTPKAIDCRKCFGAPLEC.

Positions Pro-26–Glu-45 are disordered. The segment covering Pro-34–Ala-44 has biased composition (pro residues). An MABP domain is found at Ala-44–Leu-203. Positions Val-195 to Pro-369 constitute a uDENN domain. Residues Pro-390 to Thr-526 form the cDENN domain. Residues Leu-528–Ala-644 enclose the dDENN domain. Residues Pro-717 to Gln-744 form a disordered region. Over residues Pro-729–Pro-739 the composition is skewed to low complexity. 2 PPR repeats span residues Trp-775–Pro-811 and Asp-812–Pro-846. 3 disordered regions span residues Pro-890–Thr-968, Pro-988–Ser-1115, and Arg-1204–Pro-1226. Residues Gln-897–Gln-915 show a composition bias toward low complexity. Residues Arg-933–Ala-942 show a composition bias toward polar residues. Ser-951 carries the phosphoserine modification. The segment covering Ile-1074–Leu-1083 has biased composition (pro residues). Ser-1090 carries the post-translational modification Phosphoserine. A compositionally biased stretch (low complexity) spans Gly-1103–Ser-1115.

It localises to the golgi apparatus. Its function is as follows. Guanine nucleotide exchange factor (GEF) which may activate RAB10. Promotes the exchange of GDP to GTP, converting inactive GDP-bound Rab proteins into their active GTP-bound form. In Mus musculus (Mouse), this protein is DENN domain-containing protein 4B (Dennd4b).